Here is a 72-residue protein sequence, read N- to C-terminus: UPF0154 protein Bcer98_2334 (72 aa).

The chain crosses the membrane as a helical span at residues 3–23 (IWSGILVGVVALLAGVALGFF).

The protein belongs to the UPF0154 family.

It localises to the cell membrane. This is UPF0154 protein Bcer98_2334 from Bacillus cytotoxicus (strain DSM 22905 / CIP 110041 / 391-98 / NVH 391-98).